The chain runs to 454 residues: Bifunctional protein GlmU (454 aa).

Residues 1–228 (MTLPLHVVIL…PQDVEGANDP (228 aa)) are pyrophosphorylase. Residues 10 to 13 (LAAG), K24, Q76, 81 to 82 (GT), 103 to 105 (YGD), G138, E153, N168, and N226 each bind UDP-N-acetyl-alpha-D-glucosamine. D105 provides a ligand contact to Mg(2+). Position 226 (N226) interacts with Mg(2+). Positions 229–249 (WQLAQLERAWQLRAARALSLQ) are linker. An N-acetyltransferase region spans residues 250 to 454 (GVRMADPARV…IEGWERPTKK (205 aa)). UDP-N-acetyl-alpha-D-glucosamine is bound by residues R332 and K350. The Proton acceptor role is filled by H362. UDP-N-acetyl-alpha-D-glucosamine-binding residues include Y365 and N376. Residues A379, 385–386 (NY), S404, A422, and R439 contribute to the acetyl-CoA site.

The protein in the N-terminal section; belongs to the N-acetylglucosamine-1-phosphate uridyltransferase family. It in the C-terminal section; belongs to the transferase hexapeptide repeat family. Homotrimer. Mg(2+) is required as a cofactor.

The protein resides in the cytoplasm. It catalyses the reaction alpha-D-glucosamine 1-phosphate + acetyl-CoA = N-acetyl-alpha-D-glucosamine 1-phosphate + CoA + H(+). The catalysed reaction is N-acetyl-alpha-D-glucosamine 1-phosphate + UTP + H(+) = UDP-N-acetyl-alpha-D-glucosamine + diphosphate. It participates in nucleotide-sugar biosynthesis; UDP-N-acetyl-alpha-D-glucosamine biosynthesis; N-acetyl-alpha-D-glucosamine 1-phosphate from alpha-D-glucosamine 6-phosphate (route II): step 2/2. The protein operates within nucleotide-sugar biosynthesis; UDP-N-acetyl-alpha-D-glucosamine biosynthesis; UDP-N-acetyl-alpha-D-glucosamine from N-acetyl-alpha-D-glucosamine 1-phosphate: step 1/1. It functions in the pathway bacterial outer membrane biogenesis; LPS lipid A biosynthesis. In terms of biological role, catalyzes the last two sequential reactions in the de novo biosynthetic pathway for UDP-N-acetylglucosamine (UDP-GlcNAc). The C-terminal domain catalyzes the transfer of acetyl group from acetyl coenzyme A to glucosamine-1-phosphate (GlcN-1-P) to produce N-acetylglucosamine-1-phosphate (GlcNAc-1-P), which is converted into UDP-GlcNAc by the transfer of uridine 5-monophosphate (from uridine 5-triphosphate), a reaction catalyzed by the N-terminal domain. The polypeptide is Bifunctional protein GlmU (Xanthomonas oryzae pv. oryzae (strain MAFF 311018)).